Here is a 569-residue protein sequence, read N- to C-terminus: Urease subunit alpha (569 aa).

The Urease domain occupies 131 to 569; it reads GSIDTHIHFI…VPMAQRYFLL (439 aa). Residues H136, H138, and K219 each coordinate Ni(2+). Position 219 is an N6-carboxylysine (K219). Position 221 (H221) interacts with substrate. 2 residues coordinate Ni(2+): H248 and H274. The active-site Proton donor is the H322. Position 362 (D362) interacts with Ni(2+).

It belongs to the metallo-dependent hydrolases superfamily. Urease alpha subunit family. Heterotrimer of UreA (gamma), UreB (beta) and UreC (alpha) subunits. Three heterotrimers associate to form the active enzyme. Ni cation serves as cofactor. Post-translationally, carboxylation allows a single lysine to coordinate two nickel ions.

The protein localises to the cytoplasm. The catalysed reaction is urea + 2 H2O + H(+) = hydrogencarbonate + 2 NH4(+). It participates in nitrogen metabolism; urea degradation; CO(2) and NH(3) from urea (urease route): step 1/1. The sequence is that of Urease subunit alpha from Prochlorococcus marinus (strain AS9601).